Consider the following 460-residue polypeptide: Proton extrusion protein PxcA (460 aa).

The tract at residues 84 to 194 is disordered; it reads RLPDPEQNGS…KTNLDNSNAP (111 aa). A compositionally biased stretch (basic and acidic residues) spans 114 to 136; sequence NDGKDAENGRQSRDPSILEKLEF. Polar residues predominate over residues 167–194; it reads LTSSQPEPSDPSIKTNLAKTNLDNSNAP. The next 4 helical transmembrane spans lie at 242-262, 337-357, 373-393, and 420-440; these read FLLL…HFLF, GLKN…LILI, IYGL…DVFV, and FIYG…KYWI.

The protein belongs to the CemA family.

Its subcellular location is the cell inner membrane. Its function is as follows. Required for H(+) efflux immediately after light irradiation to form a rapid H(+) concentration gradient across the thylakoid membranes. Together with PxcL, contributes to transient H(+) uptake following dark to light transition. This chain is Proton extrusion protein PxcA, found in Synechococcus sp. (strain JA-3-3Ab) (Cyanobacteria bacterium Yellowstone A-Prime).